Here is a 255-residue protein sequence, read N- to C-terminus: Small ribosomal subunit protein eS1 (255 aa).

Residues 1-18 are compositionally biased toward basic residues; sequence MAVGKNKRLSKGKKGLKK. The segment at 1 to 22 is disordered; the sequence is MAVGKNKRLSKGKKGLKKRAQD. At A2 the chain carries N-acetylalanine; partial.

Belongs to the eukaryotic ribosomal protein eS1 family. As to quaternary structure, component of the small ribosomal subunit. Mature ribosomes consist of a small (40S) and a large (60S) subunit. The 40S subunit contains about 33 different proteins and 1 molecule of RNA (18S). The 60S subunit contains about 49 different proteins and 3 molecules of RNA (25S, 5.8S and 5S).

Its subcellular location is the cytoplasm. The chain is Small ribosomal subunit protein eS1 from Uncinocarpus reesii (strain UAMH 1704).